We begin with the raw amino-acid sequence, 390 residues long: Protein STRICTOSIDINE SYNTHASE-LIKE 3 (390 aa).

Residues 1-25 form the signal peptide; the sequence is MAMSILAKIFLVFAIYCAIDPFSHS. 2 N-linked (GlcNAc...) asparagine glycosylation sites follow: asparagine 95 and asparagine 108.

This sequence belongs to the strictosidine synthase family.

Its subcellular location is the vacuole. The sequence is that of Protein STRICTOSIDINE SYNTHASE-LIKE 3 from Arabidopsis thaliana (Mouse-ear cress).